Reading from the N-terminus, the 282-residue chain is Malonyl-[acyl-carrier protein] O-methyltransferase 1 (282 aa).

It belongs to the methyltransferase superfamily.

The enzyme catalyses malonyl-[ACP] + S-adenosyl-L-methionine = malonyl-[ACP] methyl ester + S-adenosyl-L-homocysteine. It functions in the pathway cofactor biosynthesis; biotin biosynthesis. Converts the free carboxyl group of a malonyl-thioester to its methyl ester by transfer of a methyl group from S-adenosyl-L-methionine (SAM). It allows to synthesize pimeloyl-ACP via the fatty acid synthetic pathway. This is Malonyl-[acyl-carrier protein] O-methyltransferase 1 from Coxiella burnetii (strain RSA 493 / Nine Mile phase I).